Consider the following 147-residue polypeptide: Putative HTH-type transcriptional regulator slr0846 (147 aa).

In terms of domain architecture, HTH rrf2-type spans 2 to 130 (KLTTKSHYSV…YSITLADLYY (129 aa)).

This Synechocystis sp. (strain ATCC 27184 / PCC 6803 / Kazusa) protein is Putative HTH-type transcriptional regulator slr0846.